A 352-amino-acid chain; its full sequence is MGGLYSEYLNPEKVLEHYNYTKETLDMQETTSRKVASAFIIILCCAIVVENLLVLIAVARNSKFHSAMYLFLGNLAASDLLAGVAFVANTLLSGHVTLSLTPVQWFAREGSAFITLSASVFSLLAIAIERQVALAKVKLYGSDKSCRMLMLIGASWLISLILGGLPILGWNCLNQLEACSTVLPLYAKHYVLCVVTIFSVILLAIVALYVRIYFVVRSSHADVAGPQTLALLKTVTIVLGVFIICWLPAFSILLLDSTCPVRACPVLYKAHYFFAFATLNSLLNPVIYTWRSRDLRREVLRPLQCWRRGKGVTGRRGGNPGHRLLPLRSSSSLERGMHMPTSPTFLEGNTVV.

The Extracellular portion of the chain corresponds to 1 to 34 (MGGLYSEYLNPEKVLEHYNYTKETLDMQETTSRK). An N-linked (GlcNAc...) asparagine glycan is attached at asparagine 19. A helical transmembrane segment spans residues 35–59 (VASAFIIILCCAIVVENLLVLIAVA). The Cytoplasmic segment spans residues 60 to 66 (RNSKFHS). Residues 67–95 (AMYLFLGNLAASDLLAGVAFVANTLLSGH) traverse the membrane as a helical segment. Residues 96–109 (VTLSLTPVQWFARE) are Extracellular-facing. Residues 110 to 128 (GSAFITLSASVFSLLAIAI) form a helical membrane-spanning segment. At 129-147 (ERQVALAKVKLYGSDKSCR) the chain is on the cytoplasmic side. The helical transmembrane segment at 148 to 173 (MLMLIGASWLISLILGGLPILGWNCL) threads the bilayer. Over 174-189 (NQLEACSTVLPLYAKH) the chain is Extracellular. A helical membrane pass occupies residues 190 to 210 (YVLCVVTIFSVILLAIVALYV). At 211–233 (RIYFVVRSSHADVAGPQTLALLK) the chain is on the cytoplasmic side. The chain crosses the membrane as a helical span at residues 234-255 (TVTIVLGVFIICWLPAFSILLL). Topologically, residues 256–271 (DSTCPVRACPVLYKAH) are extracellular. The chain crosses the membrane as a helical span at residues 272-292 (YFFAFATLNSLLNPVIYTWRS). Residues 293 to 352 (RDLRREVLRPLQCWRRGKGVTGRRGGNPGHRLLPLRSSSSLERGMHMPTSPTFLEGNTVV) are Cytoplasmic-facing. The S-palmitoyl cysteine moiety is linked to residue cysteine 305. Positions 333–352 (LERGMHMPTSPTFLEGNTVV) are disordered.

Belongs to the G-protein coupled receptor 1 family. In terms of tissue distribution, most abundant in heart and lung; low, but clearly observed in kidney, liver and thymus; much lower but detectable in brain, testis, stomach and intestine. Not significantly detected in any of the sections of embryonic day (E) 14-18, except in embryonic brain.

The protein resides in the cell membrane. Receptor for the lysosphingolipid sphingosine 1-phosphate (S1P). S1P is a bioactive lysophospholipid that elicits diverse physiological effects on most types of cells and tissues. Receptor for the chemokine-like protein FAM19A5. Mediates the inhibitory effect of FAM19A5 on vascular smooth muscle cell proliferation and migration. In lymphoid follicles, couples the binding of S1P to the activation of GNA13 and downstream inhibition of AKT activation leading to suppression of germinal center (GC) B cell growth and migration outside the GC niche. The sequence is that of Sphingosine 1-phosphate receptor 2 (S1pr2) from Mus musculus (Mouse).